A 265-amino-acid polypeptide reads, in one-letter code: Glutamate racemase (265 aa).

Substrate contacts are provided by residues 9–10 (DS) and 41–42 (YS). The active-site Proton donor/acceptor is C73. Position 74-75 (74-75 (NT)) interacts with substrate. C184 (proton donor/acceptor) is an active-site residue. 185–186 (TH) provides a ligand contact to substrate.

Belongs to the aspartate/glutamate racemases family.

The enzyme catalyses L-glutamate = D-glutamate. The protein operates within cell wall biogenesis; peptidoglycan biosynthesis. Provides the (R)-glutamate required for cell wall biosynthesis. The protein is Glutamate racemase of Actinobacillus pleuropneumoniae serotype 5b (strain L20).